We begin with the raw amino-acid sequence, 239 residues long: Adapter protein MecA (239 aa).

Residues 118-128 are compositionally biased toward basic and acidic residues; that stretch reads EQRTKEKEAQG. The disordered stretch occupies residues 118–137; the sequence is EQRTKEKEAQGSKRQKSSAR.

It belongs to the MecA family. In terms of assembly, homodimer.

Its function is as follows. Enables the recognition and targeting of unfolded and aggregated proteins to the ClpC protease or to other proteins involved in proteolysis. The sequence is that of Adapter protein MecA from Staphylococcus aureus (strain bovine RF122 / ET3-1).